We begin with the raw amino-acid sequence, 160 residues long: CXXC motif containing zinc binding protein (160 aa).

The Zn(2+) site is built by cysteine 33, cysteine 36, cysteine 67, and cysteine 70. Serine 75 is modified (phosphoserine).

Belongs to the UPF0587 family. As to quaternary structure, monomer.

The protein is CXXC motif containing zinc binding protein of Rattus norvegicus (Rat).